The sequence spans 489 residues: Metalloreductase STEAP2 (489 aa).

NADP(+) is bound by residues 37 to 40 (SGDF), 59 to 60 (SR), 92 to 99 (IHREHYTS), Asn117, and Ala150. FAD-binding residues include Trp151 and Asp159. A helical transmembrane segment spans residues 207–227 (LFTLWRGPVVVAISLATFFFL). Tyr228 is a Fe(3+) binding site. The chain crosses the membrane as a helical span at residues 258-278 (LPIVAITLLSLVYLAGLLAAA). In terms of domain architecture, Ferric oxidoreductase spans 258 to 406 (LPIVAITLLS…LGYVALLITT (149 aa)). 2 residues coordinate FAD: Gln280 and Arg301. The next 4 membrane-spanning stretches (helical) occupy residues 304–324 (LGLL…CLPM), 358–378 (MYIS…VTSI), 392–412 (FIQS…VLIY), and 431–451 (FVLA…LLLP). Residue His315 participates in heme b binding. Position 318 (Tyr318) interacts with Fe(3+). The FAD site is built by Ser377 and Gln394. His408 provides a ligand contact to heme b. Ser482 is modified (phosphoserine).

This sequence belongs to the STEAP family. FAD serves as cofactor. Heme b is required as a cofactor.

The protein resides in the cell membrane. The protein localises to the endosome membrane. The catalysed reaction is 2 Fe(2+) + NADP(+) + H(+) = 2 Fe(3+) + NADPH. The enzyme catalyses 2 Cu(+) + NADP(+) + H(+) = 2 Cu(2+) + NADPH. In terms of biological role, integral membrane protein that functions as a NADPH-dependent ferric-chelate reductase, using NADPH from one side of the membrane to reduce a Fe(3+) chelate that is bound on the other side of the membrane. Mediates sequential transmembrane electron transfer from NADPH to FAD and onto heme, and finally to the Fe(3+) chelate. Can also reduce Cu(2+) to Cu(1+). The protein is Metalloreductase STEAP2 (Steap2) of Mus musculus (Mouse).